The chain runs to 577 residues: Cytochrome P450 714D1 (577 aa).

The Lumenal segment spans residues 1-3; it reads MES. A helical; Signal-anchor for type III membrane protein membrane pass occupies residues 4–24; it reads FFVFFTAAALPVVVAAAVIAG. At 25–577 the chain is on the cytoplasmic side; that stretch reads LCITAAWLAR…STAPVHSSHN (553 aa). Residues 315–343 are disordered; it reads REHGGKAAPPSPPERDFLGSIIENSGGQP. Position 504 (Cys-504) interacts with heme.

This sequence belongs to the cytochrome P450 family. Requires heme as cofactor. In terms of tissue distribution, expressed in rapidly elongating or dividing tissues, including the shoot apical meristem, the intercalary meristem and elongating zones of internodes, and panicle but not in young seedlings, roots and leaves. During the heading stage, the highest expression is detected in the flowering spikelets, anthers, the divisional zone and the node of the uppermost internode.

It is found in the endoplasmic reticulum membrane. In terms of biological role, catalyzes the 16alpha,17-epoxidation on non-13-hydroxylated gibberellins (GAs), including GA4, GA9, and GA12. No activity with GA1, GA20, GA53 or ent-kaurenoic acid. Reduces the biological activity of GAs. The chain is Cytochrome P450 714D1 (CYP714D1) from Oryza sativa subsp. japonica (Rice).